A 165-amino-acid polypeptide reads, in one-letter code: Nucleotide-binding protein MXAN_1478 (165 aa).

It belongs to the YajQ family.

Functionally, nucleotide-binding protein. The sequence is that of Nucleotide-binding protein MXAN_1478 from Myxococcus xanthus (strain DK1622).